The following is a 593-amino-acid chain: Transcriptional repressor p66-beta (593 aa).

Serine 17 carries the post-translational modification Phosphoserine. Residues lysine 33, lysine 66, and lysine 97 each participate in a glycyl lysine isopeptide (Lys-Gly) (interchain with G-Cter in SUMO2) cross-link. The disordered stretch occupies residues 62-123 (ELPTKQDGSG…PERGRLTPSP (62 aa)). Basic and acidic residues-rich tracts occupy residues 74-100 (GYEEKLNGNLRPHGDNRTAGRPGKENI) and 108-118 (SARRSEPERGR). Residue threonine 120 is modified to Phosphothreonine. A phosphoserine mark is found at serine 122, serine 129, serine 134, and serine 135. A coiled-coil region spans residues 140-194 (SRMEERLKAANLEMFKGKGIEERQQLIKQLRDELRLEEARLVLLKKLRQSQLQKE). A Glycyl lysine isopeptide (Lys-Gly) (interchain with G-Cter in SUMO2) cross-link involves residue lysine 147. Residues 165–195 (LIKQLRDELRLEEARLVLLKKLRQSQLQKEN) form a CR1; interaction with MBD2 and MBD3 region. A Glycyl lysine isopeptide (Lys-Gly) (interchain with G-Cter in SUMO2) cross-link involves residue lysine 199. Serine 208 carries the phosphoserine modification. The segment at 213–235 (SPAHVGQQGLSKLPSRPGAQGVE) is disordered. A Glycyl lysine isopeptide (Lys-Gly) (interchain with G-Cter in SUMO2) cross-link involves residue lysine 281. Serine 333, serine 338, and serine 340 each carry phosphoserine. Positions 340-480 (SAMTDAANSQ…QEQEIEQRLQ (141 aa)) are CR2; histone tail-binding. Glycyl lysine isopeptide (Lys-Gly) (interchain with G-Cter in SUMO2) cross-links involve residues lysine 353, lysine 454, and lysine 467. The GATA-type zinc-finger motif lies at 414 to 467 (RVEPFVCAQCRTDFTPHWKQEKNGKILCEQCMTSNQKKALKAEHTNRLKNAFVK). Residues 449–482 (QKKALKAEHTNRLKNAFVKALQQEQEIEQRLQQQ) adopt a coiled-coil conformation. Phosphoserine is present on serine 486. Lysine 498 participates in a covalent cross-link: Glycyl lysine isopeptide (Lys-Gly) (interchain with G-Cter in SUMO2).

In terms of assembly, homooligomer. Component of the nucleosome remodeling and deacetylase (NuRD) repressor complex, composed of core proteins MTA1, MTA2, MTA3, RBBP4, RBBP7, HDAC1, HDAC2, MBD2, MBD3, and peripherally associated proteins CDK2AP1, CDK2AP2, GATAD2A, GATAD2B, CHD3, CHD4 and CHD5. The exact stoichiometry of the NuRD complex is unknown, and some subunits such as MBD2 and MBD3, GATAD2A and GATAD2B, and CHD3, CHD4 and CHD5 define mutually exclusive NuRD complexes. Interacts with MBD2; this is required for the enhancement of MBD2-mediated repression and for targeting to the chromatin. Interacts with MBD3. Component of the MeCP1 histone deacetylase complex. Interacts with histone tails, including that of histones H2A, H2B, H3 and H4. Interacts with ERCC6. As to expression, widely expressed.

The protein resides in the nucleus speckle. Its subcellular location is the nucleus. It is found in the chromosome. Functionally, transcriptional repressor. Acts as a component of the histone deacetylase NuRD complex which participates in the remodeling of chromatin. Enhances MBD2-mediated repression. Efficient repression requires the presence of GATAD2A. Targets MBD3 to discrete loci in the nucleus. May play a role in synapse development. This Homo sapiens (Human) protein is Transcriptional repressor p66-beta (GATAD2B).